Here is a 71-residue protein sequence, read N- to C-terminus: Sec-independent protein translocase protein TatA (71 aa).

A helical membrane pass occupies residues 1–21 (MGSFSMGHWLIVLAIIVLLFG). Residues 41-57 (KEMEDETPVEKIEKADS) are compositionally biased toward basic and acidic residues. A disordered region spans residues 41-71 (KEMEDETPVEKIEKADSETQSTKQNETTKNV). A compositionally biased stretch (polar residues) spans 58-71 (ETQSTKQNETTKNV).

Belongs to the TatA/E family. The Tat system comprises two distinct complexes: a TatABC complex, containing multiple copies of TatA, TatB and TatC subunits, and a separate TatA complex, containing only TatA subunits. Substrates initially bind to the TatABC complex, which probably triggers association of the separate TatA complex to form the active translocon.

The protein localises to the cell inner membrane. Functionally, part of the twin-arginine translocation (Tat) system that transports large folded proteins containing a characteristic twin-arginine motif in their signal peptide across membranes. TatA could form the protein-conducting channel of the Tat system. In Campylobacter fetus subsp. fetus (strain 82-40), this protein is Sec-independent protein translocase protein TatA.